We begin with the raw amino-acid sequence, 103 residues long: ATP synthase F(0) complex subunit g, mitochondrial (103 aa).

Residue A2 is modified to N-acetylalanine. N6-acetyllysine occurs at positions 11, 24, 35, and 54.

As to quaternary structure, component of the ATP synthase complex composed at least of ATP5F1A/subunit alpha, ATP5F1B/subunit beta, ATP5MC1/subunit c (homooctomer), MT-ATP6/subunit a, MT-ATP8/subunit 8, ATP5ME/subunit e, ATP5MF/subunit f, ATP5MG/subunit g, ATP5MK/subunit k, ATP5MJ/subunit j, ATP5F1C/subunit gamma, ATP5F1D/subunit delta, ATP5F1E/subunit epsilon, ATP5PF/subunit F6, ATP5PB/subunit b, ATP5PD/subunit d, ATP5PO/subunit OSCP. ATP synthase complex consists of a soluble F(1) head domain (subunits alpha(3) and beta(3)) - the catalytic core - and a membrane F(0) domain - the membrane proton channel (subunits c, a, 8, e, f, g, k and j). These two domains are linked by a central stalk (subunits gamma, delta, and epsilon) rotating inside the F1 region and a stationary peripheral stalk (subunits F6, b, d, and OSCP).

It is found in the mitochondrion. The protein resides in the mitochondrion inner membrane. Subunit g, of the mitochondrial membrane ATP synthase complex (F(1)F(0) ATP synthase or Complex V) that produces ATP from ADP in the presence of a proton gradient across the membrane which is generated by electron transport complexes of the respiratory chain. ATP synthase complex consist of a soluble F(1) head domain - the catalytic core - and a membrane F(1) domain - the membrane proton channel. These two domains are linked by a central stalk rotating inside the F(1) region and a stationary peripheral stalk. During catalysis, ATP synthesis in the catalytic domain of F(1) is coupled via a rotary mechanism of the central stalk subunits to proton translocation. In vivo, can only synthesize ATP although its ATP hydrolase activity can be activated artificially in vitro. Part of the complex F(0) domain. This chain is ATP synthase F(0) complex subunit g, mitochondrial, found in Bos taurus (Bovine).